The chain runs to 452 residues: Na(+)/H(+) antiporter NhaA (452 aa).

11 consecutive transmembrane segments (helical) span residues 27 to 47 (FSGI…NSAL), 67 to 87 (FIGM…FFLM), 108 to 128 (AFPA…YTLF), 137 to 157 (GFGI…LLLG), 166 to 186 (VFLV…IAIF), 194 to 214 (LWLL…KMGV), 216 to 236 (SLFP…NCGI), 314 to 334 (PWSA…VAIS), 343 to 363 (GVLP…ILGL), 381 to 401 (WIDI…SIFI), and 414 to 434 (VAKI…YFFI).

This sequence belongs to the NhaA Na(+)/H(+) (TC 2.A.33) antiporter family.

It is found in the cell inner membrane. It catalyses the reaction Na(+)(in) + 2 H(+)(out) = Na(+)(out) + 2 H(+)(in). Functionally, na(+)/H(+) antiporter that extrudes sodium in exchange for external protons. The chain is Na(+)/H(+) antiporter NhaA from Wolinella succinogenes (strain ATCC 29543 / DSM 1740 / CCUG 13145 / JCM 31913 / LMG 7466 / NCTC 11488 / FDC 602W) (Vibrio succinogenes).